Here is a 305-residue protein sequence, read N- to C-terminus: MELTFLGTNAGVPSKDRNVTSMVLDLQNKQKSLWMFDCGEATQHQILHSHVKLSRINKIFITHLHGDHIFGLPGLLCSRSMGGTENPLTIYGPTGIKAFIETALTLSQSYLTYPLDIIEIEQDGFLFEEEGIRASCGALSHPVPCFGYRLEEDNKPGKLNADKLETENIPRGPWYKLLKQGKTVTLPDGRIIDGKDYLSTEIKGRCIVIFGDTQPTPNAVKLAENADVIVHEATFKHDMADKANSRGHSSTIQAAELAKKANAKRLIITHISSRYSPKETPELLAECHTIFDNTQIASDFETFKL.

Zn(2+) is bound by residues H63, H65, D67, H68, H141, D212, and H270. The Proton acceptor role is filled by D67.

Belongs to the RNase Z family. RNase BN subfamily. In terms of assembly, homodimer. Requires Zn(2+) as cofactor.

Functionally, zinc phosphodiesterase, which has both exoribonuclease and endoribonuclease activities. The protein is Ribonuclease BN of Proteus mirabilis (strain HI4320).